The primary structure comprises 117 residues: NADH-ubiquinone oxidoreductase chain 3 (117 aa).

Helical transmembrane passes span 1–21 (MLML…VMML), 58–78 (FLIA…LPMI), and 86–106 (LMNW…GLYH).

Belongs to the complex I subunit 3 family.

Its subcellular location is the mitochondrion membrane. It carries out the reaction a ubiquinone + NADH + 5 H(+)(in) = a ubiquinol + NAD(+) + 4 H(+)(out). Functionally, core subunit of the mitochondrial membrane respiratory chain NADH dehydrogenase (Complex I) that is believed to belong to the minimal assembly required for catalysis. Complex I functions in the transfer of electrons from NADH to the respiratory chain. The immediate electron acceptor for the enzyme is believed to be ubiquinone. In Anopheles gambiae (African malaria mosquito), this protein is NADH-ubiquinone oxidoreductase chain 3 (mt:ND3).